The sequence spans 234 residues: Demethylmenaquinone methyltransferase (234 aa).

S-adenosyl-L-methionine-binding positions include Thr-58, Asp-79, and Asn-106–Ala-107.

The protein belongs to the class I-like SAM-binding methyltransferase superfamily. MenG/UbiE family.

The catalysed reaction is a 2-demethylmenaquinol + S-adenosyl-L-methionine = a menaquinol + S-adenosyl-L-homocysteine + H(+). It functions in the pathway quinol/quinone metabolism; menaquinone biosynthesis; menaquinol from 1,4-dihydroxy-2-naphthoate: step 2/2. Methyltransferase required for the conversion of demethylmenaquinol (DMKH2) to menaquinol (MKH2). This is Demethylmenaquinone methyltransferase from Geobacillus stearothermophilus (Bacillus stearothermophilus).